A 422-amino-acid polypeptide reads, in one-letter code: MLDIRLFREQPELVREGFAKVGRDPGLVDQVIGLDLKRREAITEVERLKAERNAGSKDVARTKDKAERDVKIAAMKLVGDQITELDAQANAIDLELHNLLLDLPNLPLPEVPVGKDEHDNVVVRVEGTIQEPDFAVKPHWELGEALGILDFERGVRMSGTRFFVMKGLGVRLQRALISWMIDMHVDQHGYTELAVPYLVKADAMVGTGNLPKFADTIFHIEDTDLWLIPTAEVPVTNLHREEILDKAQLPLRYVAHTPCFRNEQMSAGRDVRGIKRLYQFDKVEMVKMVEPATSYDELFSLISNAEDVCKGLKIPYRLLQLCTADLGIATVKYDLEMWAPGMNEWLEVSSCGLFGDYQARRANIRYRPEAGAKPEFVHTLNGSGLALPRVIIAILENYQNADGSVTVPEVLRPYMGGIERIG.

230–232 (TAE) contributes to the L-serine binding site. Residue 261–263 (RNE) participates in ATP binding. E284 contributes to the L-serine binding site. Residue 347–350 (EVSS) participates in ATP binding. S383 contributes to the L-serine binding site.

It belongs to the class-II aminoacyl-tRNA synthetase family. Type-1 seryl-tRNA synthetase subfamily. As to quaternary structure, homodimer. The tRNA molecule binds across the dimer.

It localises to the cytoplasm. The catalysed reaction is tRNA(Ser) + L-serine + ATP = L-seryl-tRNA(Ser) + AMP + diphosphate + H(+). The enzyme catalyses tRNA(Sec) + L-serine + ATP = L-seryl-tRNA(Sec) + AMP + diphosphate + H(+). Its pathway is aminoacyl-tRNA biosynthesis; selenocysteinyl-tRNA(Sec) biosynthesis; L-seryl-tRNA(Sec) from L-serine and tRNA(Sec): step 1/1. Functionally, catalyzes the attachment of serine to tRNA(Ser). Is also able to aminoacylate tRNA(Sec) with serine, to form the misacylated tRNA L-seryl-tRNA(Sec), which will be further converted into selenocysteinyl-tRNA(Sec). The sequence is that of Serine--tRNA ligase from Herpetosiphon aurantiacus (strain ATCC 23779 / DSM 785 / 114-95).